An 813-amino-acid polypeptide reads, in one-letter code: Immunoglobulin superfamily DCC subclass member 3 (813 aa).

The tract at residues 1 to 21 is disordered; sequence MAEPRTASPRRLPALRRPGFL. The first 47 residues, 1-47, serve as a signal peptide directing secretion; sequence MAEPRTASPRRLPALRRPGFLPPLLPPPPPPLLLLLLLLPLPAPSLG. Residues 9–19 are compositionally biased toward low complexity; that stretch reads PRRLPALRRPG. Ig-like C2-type domains follow at residues 49–151, 151–232, 250–333, and 341–428; these read GHSA…ATMS, SDFH…VRVS, PTIL…RTAQ, and PAEF…ARLT. 2 disulfide bridges follow: Cys75/Cys129 and Cys172/Cys221. Asn105 carries N-linked (GlcNAc...) asparagine glycosylation. Residue Asn258 is glycosylated (N-linked (GlcNAc...) asparagine). 2 disulfides stabilise this stretch: Cys271–Cys319 and Cys363–Cys412. N-linked (GlcNAc...) asparagine glycosylation is found at Asn393 and Asn394. Fibronectin type-III domains are found at residues 438 to 532 and 535 to 630; these read PPRN…TLGE and VPPP…ASER. Asn592, Asn616, and Asn646 each carry an N-linked (GlcNAc...) asparagine glycan. Residues 653 to 673 form a helical membrane-spanning segment; the sequence is IVIGIHIGVTCIIFCVLFLLF. Disordered stretches follow at residues 689 to 724 and 775 to 813; these read LSPP…EKPV and TTEA…AAPQ.

The protein belongs to the immunoglobulin superfamily. DCC family. Detected in cerebellum, kidney, heart, lung, skeletal muscle and spleen.

The protein resides in the membrane. The chain is Immunoglobulin superfamily DCC subclass member 3 (Igdcc3) from Mus musculus (Mouse).